Reading from the N-terminus, the 55-residue chain is Large ribosomal subunit protein bL33 (55 aa).

This sequence belongs to the bacterial ribosomal protein bL33 family.

The chain is Large ribosomal subunit protein bL33 from Xanthomonas oryzae pv. oryzae (strain PXO99A).